Consider the following 354-residue polypeptide: Caffeic acid 3-O-methyltransferase (354 aa).

Residue 121-127 coordinates substrate; that stretch reads MNQDKVL. The interval 153–171 is substrate binding; that stretch reads AFEYHGKDQRFNKVFNSGM. Residues Gly-199, Asp-222, Asp-242, Met-243, and Lys-256 each coordinate S-adenosyl-L-methionine. His-260 serves as the catalytic Proton acceptor.

This sequence belongs to the class I-like SAM-binding methyltransferase superfamily. Cation-independent O-methyltransferase family. COMT subfamily. As to quaternary structure, homodimer.

The catalysed reaction is (E)-caffeate + S-adenosyl-L-methionine = (E)-ferulate + S-adenosyl-L-homocysteine + H(+). Its pathway is aromatic compound metabolism; phenylpropanoid biosynthesis. Its function is as follows. Catalyzes the conversion of caffeic acid to ferulic acid and of 5-hydroxyferulic acid to sinapic acid. The resulting products may subsequently be converted to the corresponding alcohols that are incorporated into lignins. The protein is Caffeic acid 3-O-methyltransferase of Zinnia elegans (Garden zinnia).